The following is a 347-amino-acid chain: UPF0283 membrane protein ECA1987 (347 aa).

Basic and acidic residues predominate over residues 1–11 (MNEPLKPRVTF). The interval 1 to 48 (MNEPLKPRVTFDDVSPQEPQPQLRAGLAFDEQSSTPFSPISREEEVPE) is disordered. 3 consecutive transmembrane segments (helical) span residues 70–90 (MVMA…VQSL), 99–119 (WIAL…VGSL), and 213–233 (ESTL…FIAW).

Belongs to the UPF0283 family.

It is found in the cell inner membrane. The polypeptide is UPF0283 membrane protein ECA1987 (Pectobacterium atrosepticum (strain SCRI 1043 / ATCC BAA-672) (Erwinia carotovora subsp. atroseptica)).